The sequence spans 417 residues: UDP-N-acetylglucosamine 1-carboxyvinyltransferase (417 aa).

A phosphoenolpyruvate-binding site is contributed by 22-23; that stretch reads KN. Arginine 93 is a UDP-N-acetyl-alpha-D-glucosamine binding site. The Proton donor role is filled by cysteine 117. Residue cysteine 117 is modified to 2-(S-cysteinyl)pyruvic acid O-phosphothioketal. UDP-N-acetyl-alpha-D-glucosamine is bound by residues 122-126, aspartate 305, and isoleucine 327; that span reads RPVDQ.

This sequence belongs to the EPSP synthase family. MurA subfamily.

The protein resides in the cytoplasm. It catalyses the reaction phosphoenolpyruvate + UDP-N-acetyl-alpha-D-glucosamine = UDP-N-acetyl-3-O-(1-carboxyvinyl)-alpha-D-glucosamine + phosphate. The protein operates within cell wall biogenesis; peptidoglycan biosynthesis. In terms of biological role, cell wall formation. Adds enolpyruvyl to UDP-N-acetylglucosamine. This is UDP-N-acetylglucosamine 1-carboxyvinyltransferase from Nitrosomonas eutropha (strain DSM 101675 / C91 / Nm57).